Here is a 209-residue protein sequence, read N- to C-terminus: Proteasome subunit beta (209 aa).

Residues 1–10 (MVEQSDTMKG) constitute a propeptide, removed in mature form; by autocatalysis. Thr11 acts as the Nucleophile in catalysis.

It belongs to the peptidase T1B family. The 20S proteasome core is composed of 14 alpha and 14 beta subunits that assemble into four stacked heptameric rings, resulting in a barrel-shaped structure. The two inner rings, each composed of seven catalytic beta subunits, are sandwiched by two outer rings, each composed of seven alpha subunits. The catalytic chamber with the active sites is on the inside of the barrel. Has a gated structure, the ends of the cylinder being occluded by the N-termini of the alpha-subunits. Is capped at one or both ends by the proteasome regulatory ATPase, PAN.

The protein localises to the cytoplasm. It catalyses the reaction Cleavage of peptide bonds with very broad specificity.. With respect to regulation, the formation of the proteasomal ATPase PAN-20S proteasome complex, via the docking of the C-termini of PAN into the intersubunit pockets in the alpha-rings, triggers opening of the gate for substrate entry. Interconversion between the open-gate and close-gate conformations leads to a dynamic regulation of the 20S proteasome proteolysis activity. Its function is as follows. Component of the proteasome core, a large protease complex with broad specificity involved in protein degradation. This chain is Proteasome subunit beta, found in Methanospirillum hungatei JF-1 (strain ATCC 27890 / DSM 864 / NBRC 100397 / JF-1).